A 137-amino-acid polypeptide reads, in one-letter code: Small ribosomal subunit protein uS9 (137 aa).

The tract at residues 105 to 137 (LKAEGYLTRDPRAKERKKYGLHKARKAPQYSKR) is disordered. Over residues 118 to 137 (KERKKYGLHKARKAPQYSKR) the composition is skewed to basic residues.

Belongs to the universal ribosomal protein uS9 family.

This chain is Small ribosomal subunit protein uS9 (rpsI), found in Synechocystis sp. (strain ATCC 27184 / PCC 6803 / Kazusa).